Here is a 687-residue protein sequence, read N- to C-terminus: POZ-, AT hook-, and zinc finger-containing protein 1 (687 aa).

The region spanning 41-130 is the BTB domain; it reads CDVLLRVGDE…AYTSRIVVRL (90 aa). K112 is covalently cross-linked (Glycyl lysine isopeptide (Lys-Gly) (interchain with G-Cter in SUMO2)). A compositionally biased stretch (low complexity) spans 250-260; sequence PFPSVASSAPP. Residues 250-278 form a disordered region; sequence PFPSVASSAPPLTGKRGRGRPRKANLLDS. The segment at residues 264–276 is a DNA-binding region (a.T hook); sequence KRGRGRPRKANLL. K272 participates in a covalent cross-link: Glycyl lysine isopeptide (Lys-Gly) (interchain with G-Cter in SUMO2). S282 is subject to Phosphoserine. A C2H2-type 1 zinc finger spans residues 292–314; that stretch reads LPCGLCGKVFTDANRLRQHEAQH. The interval 332 to 351 is disordered; sequence GENGLPISEDPDGPRKRSRT. 5 consecutive C2H2-type zinc fingers follow at residues 355–377, 383–405, 413–436, 442–464, and 495–518; these read VACE…KLSH, YSCP…VRSH, YICQ…KQVH, HKCQ…LACH, and NFCS…KTHH. Residues 549–558 are compositionally biased toward basic and acidic residues; sequence EGQKCSHQDP. The disordered stretch occupies residues 549 to 603; sequence EGQKCSHQDPIESSDSYGDLSDASDLKTPEKQSANGSFSCDMAVPKNKMESDGEK. Residues 605-628 form a C2H2-type 7 zinc finger; sequence YPCPECGSFFRSKSYLNKHIQKVH.

This sequence belongs to the krueppel C2H2-type zinc-finger protein family. In terms of assembly, homodimer. Interacts with RNF4. Interacts (via C-terminus) with TP53; this interaction inhibits TP53 ability to activate transcription. Ubiquitous.

The protein resides in the nucleus. Its function is as follows. Transcriptional regulator that plays a role in many biological processes such as embryogenesis, senescence, T-cell development or neurogenesis. Interacts with the TP53 protein to control genes that are important in proliferation and in the DNA-damage response. Mechanistically, the interaction inhibits the DNA binding and transcriptional activity of TP53/p53. Part of the transcriptional network modulating regulatory T-cell development and controls the generation of the regulatory T-cell pool under homeostatic conditions. In terms of biological role, (Microbial infection) Plays a positive role in viral cDNA synthesis. This is POZ-, AT hook-, and zinc finger-containing protein 1 (PATZ1) from Homo sapiens (Human).